The chain runs to 754 residues: Carbon catabolite repressor protein 4 homolog 6 (754 aa).

Disordered stretches follow at residues 34 to 65 (PYRG…DQFV) and 85 to 176 (EPYR…KTPP). Residues 50–61 (FSDRPYNDDAGR) show a composition bias toward basic and acidic residues. 2 stretches are compositionally biased toward polar residues: residues 96–106 (QRQQPPFNQNY) and 116–133 (GQWQ…NQNY). The segment covering 162 to 171 (KPSDYREWEY) has biased composition (basic and acidic residues). Mg(2+) is bound at residue Glu-237. 2 disordered regions span residues 404–431 (VSAE…QGQV) and 494–558 (IENR…DQDI). Polar residues-rich tracts occupy residues 415–431 (NYTT…QGQV), 503–525 (GNLS…QHAS), and 534–545 (DRSVSSGLSETE).

This sequence belongs to the CCR4/nocturin family. Component of the CCR4-NOT complex, at least composed of CRR4 and CAF1 proteins. The cofactor is Mg(2+).

It localises to the nucleus. The protein localises to the cytoplasm. It catalyses the reaction Exonucleolytic cleavage of poly(A) to 5'-AMP.. Acts as a catalytic component of the CCR4-NOT core complex, which in the nucleus seems to be a general transcription factor, and in the cytoplasm the major mRNA deadenylase involved in mRNA turnover. The chain is Carbon catabolite repressor protein 4 homolog 6 (CCR4-6) from Arabidopsis thaliana (Mouse-ear cress).